The sequence spans 113 residues: Small ribosomal subunit protein bS6 (113 aa).

Belongs to the bacterial ribosomal protein bS6 family.

In terms of biological role, binds together with bS18 to 16S ribosomal RNA. The protein is Small ribosomal subunit protein bS6 of Ruthia magnifica subsp. Calyptogena magnifica.